A 195-amino-acid polypeptide reads, in one-letter code: Probable GTP-binding protein EngB (195 aa).

The 173-residue stretch at 22 to 194 (LKGEVAFVGR…LDLISTLLKE (173 aa)) folds into the EngB-type G domain. Residues 30–37 (GRSNVGKS), 56–60 (GKTRS), 74–77 (DLPG), 141–144 (TKMD), and 173–175 (TSS) each bind GTP. The Mg(2+) site is built by S37 and T58.

This sequence belongs to the TRAFAC class TrmE-Era-EngA-EngB-Septin-like GTPase superfamily. EngB GTPase family. Requires Mg(2+) as cofactor.

In terms of biological role, necessary for normal cell division and for the maintenance of normal septation. The chain is Probable GTP-binding protein EngB from Thermotoga maritima (strain ATCC 43589 / DSM 3109 / JCM 10099 / NBRC 100826 / MSB8).